The following is a 121-amino-acid chain: uncharacterized protein (121 aa).

The segment at 101 to 121 (SIEPTATGSPETRDPDPSAYA) is disordered. Residues 111–121 (ETRDPDPSAYA) show a composition bias toward basic and acidic residues.

Its subcellular location is the mitochondrion. This is an uncharacterized protein from Arabidopsis thaliana (Mouse-ear cress).